The primary structure comprises 196 residues: Imidazole glycerol phosphate synthase subunit HisH (196 aa).

The Glutamine amidotransferase type-1 domain occupies 2-196 (NVVILDTGCA…AKLLKNFLEM (195 aa)). The active-site Nucleophile is C77. Active-site residues include H178 and E180.

As to quaternary structure, heterodimer of HisH and HisF.

Its subcellular location is the cytoplasm. It carries out the reaction 5-[(5-phospho-1-deoxy-D-ribulos-1-ylimino)methylamino]-1-(5-phospho-beta-D-ribosyl)imidazole-4-carboxamide + L-glutamine = D-erythro-1-(imidazol-4-yl)glycerol 3-phosphate + 5-amino-1-(5-phospho-beta-D-ribosyl)imidazole-4-carboxamide + L-glutamate + H(+). The enzyme catalyses L-glutamine + H2O = L-glutamate + NH4(+). It participates in amino-acid biosynthesis; L-histidine biosynthesis; L-histidine from 5-phospho-alpha-D-ribose 1-diphosphate: step 5/9. Its function is as follows. IGPS catalyzes the conversion of PRFAR and glutamine to IGP, AICAR and glutamate. The HisH subunit catalyzes the hydrolysis of glutamine to glutamate and ammonia as part of the synthesis of IGP and AICAR. The resulting ammonia molecule is channeled to the active site of HisF. The chain is Imidazole glycerol phosphate synthase subunit HisH from Shigella dysenteriae serotype 1 (strain Sd197).